Here is a 239-residue protein sequence, read N- to C-terminus: DNA repair protein RecO (239 aa).

Belongs to the RecO family.

Involved in DNA repair and RecF pathway recombination. The protein is DNA repair protein RecO of Bifidobacterium longum subsp. infantis (strain ATCC 15697 / DSM 20088 / JCM 1222 / NCTC 11817 / S12).